The chain runs to 470 residues: Putative gustatory receptor 28b (470 aa).

Residues 1-76 are Cytoplasmic-facing; it reads MDIEMAKEPV…KTGKKAIKKT (76 aa). The chain crosses the membrane as a helical span at residues 77 to 97; the sequence is IFGYINGIMHIAMFVFAYSLT. At 98-119 the chain is on the extracellular side; the sequence is IYNNCESVASYFFRSRITYFGD. A helical membrane pass occupies residues 120 to 140; it reads LMQIVSGFIGVTVIYLTAFVP. Topologically, residues 141 to 175 are cytoplasmic; it reads NHRLERCLQKFHTMDVQLQTVGVKIMYSKVLRFSY. Residues 176–196 form a helical membrane-spanning segment; that stretch reads MVLISMFLVNVLFTGGTFSVL. Residues 197–204 are Extracellular-facing; it reads YSSEVAPT. A helical transmembrane segment spans residues 205–225; that stretch reads MALHFTFLIQHTVIAIAIALF. Over 226-309 the chain is Cytoplasmic; sequence SCFTYLVEMR…ATANKYFTYQ (84 aa). The chain crosses the membrane as a helical span at residues 310 to 330; sequence LLTIISIAFLIIVFDAYYVLE. The Extracellular segment spans residues 331–346; sequence TLLGKSKRESKFKTVE. Residues 347–367 traverse the membrane as a helical segment; the sequence is FVTFFSCQMILYLIAIISIVE. Residues 368–423 lie on the Cytoplasmic side of the membrane; the sequence is GSNRAIKKSEKTGGIVHSLLNKTKSAEVKEKLQQFSMQLMHLKINFTAAGLFNIDR. A helical membrane pass occupies residues 424-444; the sequence is TLYFTISGALTTYLIILLQFT. Topologically, residues 445–470 are extracellular; sequence SNSPNNGYGNGSSCCETFNNMTNHTL. N-linked (GlcNAc...) asparagine glycosylation is found at Asn454, Asn464, and Asn467.

The protein belongs to the insect chemoreceptor superfamily. Gustatory receptor (GR) family. Gr66a subfamily. In terms of tissue distribution, isoforms A and E have taste neuron-specific expression restricted to the labial palps, the internal taste organs in the pharynx, and the legs. In addition to expression in a large number of taste neurons, isoform A is also expressed in a few nonchemosensory neurons, including the campaniform sensilla of the wing, leg stretch receptors, and multiple dendritic neurons in the abdomen. Isoform B is the only receptor not expressed in gustatory receptor neurons in the labellum. We observe expression of this receptor in a single large cell at the base of each maxillary palp, in campaniform sensilla of the wing, and multiple dendritic neurons in the abdomen. Isoform C is expressed by many gustatory receptor neurons in the labial palps, the pharyngeal taste clusters, and taste neurons in the legs. In addition, isoform C expressed in a single cell at the base of the maxillary palps, neurons in the Johnston's organ (JO), campaniform sensilla of the wing, stretch receptors and the femoral chordotonal organ of the legs, and multiple dendritic neurons in the abdomen. Isoform D is expressed in a small number of gustatory receptor neurons in the labial palps, the ventral cibarial sense organ (VCSO), and legs. Atypical expression is observed in three neurons in the arista, campaniform sensilla of the wing, stretch and femoral chordotonal organ receptors in the legs, and multiple dendritic neurons in the abdomen. In larvae, Isoform A is expressed in neurons of the terminal external chemosensory organ and the dorsal external chemosensory organ; and isoform E is expressed in neurons of the terminal external chemosensory organ.

It is found in the cell membrane. Its function is as follows. Probable gustatory receptor which mediates acceptance or avoidance behavior, depending on its substrates. Atypical expression also suggests nongustatory roles in the nervous system and tissues involved in proprioception, hygroreception, and other sensory modalities. It is also possible that it has chemosensory roles in the detection of internal ligands. This Drosophila melanogaster (Fruit fly) protein is Putative gustatory receptor 28b (Gr28b).